A 35-amino-acid chain; its full sequence is LNRDDDSDLHSPRYSFSEDTKCDDGWFVGTSRRTK.

The SoHo domain occupies 1–8 (LNRDDDSD). Position 15 is a phosphoserine (Ser15). The region spanning 22 to 35 (CDDGWFVGTSRRTK) is the SH3 domain.

In terms of assembly, interacts with the long isoform of AFDN and with VCL. AFDN and VCL bind to SORBS1 in a competitive manner and do not form a ternary complex. Interacts with ABL1, CBL, CBLB and INPPL1/SHIP2 through the third SH3 domain. Interaction with ABL1 occurs only after insulin stimulation while this has no effect on the interaction with INPPL1. Interacts with the insulin receptor but dissociates from it following insulin stimulation. Also interacts with SCA7, PTK2/FAK1 and flotillin. Interacts (via SH3 domain 2) with PXN. Interacts (via third SH3 domain) with the Ten-1 ICD form of TENM1; the interaction induces the translocation of SORBS1 to the nucleus. O-glycosylated.

The protein resides in the cell junction. The protein localises to the adherens junction. It is found in the cell membrane. It localises to the cytoplasm. Its subcellular location is the cytoskeleton. The protein resides in the focal adhesion. The protein localises to the nucleus. It is found in the nucleus matrix. Plays a role in tyrosine phosphorylation of CBL by linking CBL to the insulin receptor. Required for insulin-stimulated glucose transport. Involved in formation of actin stress fibers and focal adhesions. This is Sorbin and SH3 domain-containing protein 1 from Rattus norvegicus (Rat).